The sequence spans 512 residues: 2,3-bisphosphoglycerate-independent phosphoglycerate mutase (512 aa).

Positions 11 and 61 each coordinate Mn(2+). Ser-61 serves as the catalytic Phosphoserine intermediate. Residues His-122, 152–153 (RD), Arg-184, Arg-190, 259–262 (RADR), and Lys-332 each bind substrate. Residues Asp-399, His-403, Asp-440, His-441, and His-459 each contribute to the Mn(2+) site.

It belongs to the BPG-independent phosphoglycerate mutase family. Monomer. It depends on Mn(2+) as a cofactor.

The enzyme catalyses (2R)-2-phosphoglycerate = (2R)-3-phosphoglycerate. It participates in carbohydrate degradation; glycolysis; pyruvate from D-glyceraldehyde 3-phosphate: step 3/5. Its function is as follows. Catalyzes the interconversion of 2-phosphoglycerate and 3-phosphoglycerate. The polypeptide is 2,3-bisphosphoglycerate-independent phosphoglycerate mutase (Francisella philomiragia subsp. philomiragia (strain ATCC 25017 / CCUG 19701 / FSC 153 / O#319-036)).